A 96-amino-acid chain; its full sequence is Co-chaperonin GroES 1 (96 aa).

Belongs to the GroES chaperonin family. Heptamer of 7 subunits arranged in a ring. Interacts with the chaperonin GroEL.

It is found in the cytoplasm. Its function is as follows. Together with the chaperonin GroEL, plays an essential role in assisting protein folding. The GroEL-GroES system forms a nano-cage that allows encapsulation of the non-native substrate proteins and provides a physical environment optimized to promote and accelerate protein folding. GroES binds to the apical surface of the GroEL ring, thereby capping the opening of the GroEL channel. This is Co-chaperonin GroES 1 from Vibrio cholerae serotype O1 (strain ATCC 39315 / El Tor Inaba N16961).